We begin with the raw amino-acid sequence, 302 residues long: Sulfate adenylyltransferase subunit 2 (302 aa).

The protein belongs to the PAPS reductase family. CysD subfamily. Heterodimer composed of CysD, the smaller subunit, and CysN.

The catalysed reaction is sulfate + ATP + H(+) = adenosine 5'-phosphosulfate + diphosphate. It participates in sulfur metabolism; hydrogen sulfide biosynthesis; sulfite from sulfate: step 1/3. Functionally, with CysN forms the ATP sulfurylase (ATPS) that catalyzes the adenylation of sulfate producing adenosine 5'-phosphosulfate (APS) and diphosphate, the first enzymatic step in sulfur assimilation pathway. APS synthesis involves the formation of a high-energy phosphoric-sulfuric acid anhydride bond driven by GTP hydrolysis by CysN coupled to ATP hydrolysis by CysD. This is Sulfate adenylyltransferase subunit 2 from Baumannia cicadellinicola subsp. Homalodisca coagulata.